Consider the following 343-residue polypeptide: Cell cycle control protein 50C (343 aa).

Topologically, residues 1–34 (MKRKCQDYESRLPDNTAVKQQQLPAFRLQLTASE) are cytoplasmic. A helical membrane pass occupies residues 35–55 (ILSGFFAIGLFCLGMGIILLL). Residues 56–306 (SAKSIKEVEI…STLTWSGGSS (251 aa)) are Extracellular-facing. 4 N-linked (GlcNAc...) asparagine glycosylation sites follow: Asn66, Asn164, Asn205, and Asn265. Residues 307-327 (LFLALAYLVTGAVTLLASFSM) traverse the membrane as a helical segment. Over 328–343 (MALHLKLKERKTFFLQ) the chain is Cytoplasmic.

Belongs to the CDC50/LEM3 family.

It is found in the membrane. In Bos taurus (Bovine), this protein is Cell cycle control protein 50C (TMEM30C).